Here is a 947-residue protein sequence, read N- to C-terminus: Cell adhesion molecule CEACAM5 (947 aa).

The N-terminal stretch at 1–34 is a signal peptide; the sequence is MEASSVLPCKWCTHLQGLLLTASFLTCCHLPTTA. Ig-like V-type domains follow at residues 35–132, 166–259, 270–378, 392–498, 509–615, 642–733, and 746–851; these read QITI…EIVS, SEGG…VQLY, PLQV…LHVN, RLSI…LQLD, QVKI…LHVN, GESV…VQLQ, and DQLI…VQVH. N-linked (GlcNAc...) asparagine glycans are attached at residues Asn57, Asn103, Asn110, Asn207, Asn224, Asn341, Asn461, Asn472, Asn578, Asn698, Asn709, Asn816, and Asn823. One can recognise an Ig-like C2-type 1 domain in the interval 859–943; it reads PFVRVTDTTV…SKSSLPVRLA (85 aa). A disulfide bridge connects residues Cys878 and Cys926.

Belongs to the immunoglobulin superfamily. CEA family. Homodimer.

Its subcellular location is the cell membrane. The protein localises to the apical cell membrane. It localises to the cell surface. In terms of biological role, cell surface glycoprotein that plays a role in cell adhesion, intracellular signaling and tumor progression. Mediates homophilic and heterophilic cell adhesion with other carcinoembryonic antigen-related cell adhesion molecules, such as CEACAM6. Plays a role as an oncogene by promoting tumor progression; induces resistance to anoikis of colorectal carcinoma cells. In Mus musculus (Mouse), this protein is Cell adhesion molecule CEACAM5.